The sequence spans 333 residues: DNA-directed RNA polymerase subunit alpha (333 aa).

The segment at 1 to 239 (MSAVLDKGSL…TQARCFLNIA (239 aa)) is alpha N-terminal domain (alpha-NTD). The tract at residues 259 to 333 (DASDLLSARI…SLGMNLDSHG (75 aa)) is alpha C-terminal domain (alpha-CTD).

Belongs to the RNA polymerase alpha chain family. In terms of assembly, homodimer. The RNAP catalytic core consists of 2 alpha, 1 beta, 1 beta' and 1 omega subunit. When a sigma factor is associated with the core the holoenzyme is formed, which can initiate transcription.

It carries out the reaction RNA(n) + a ribonucleoside 5'-triphosphate = RNA(n+1) + diphosphate. Functionally, DNA-dependent RNA polymerase catalyzes the transcription of DNA into RNA using the four ribonucleoside triphosphates as substrates. The polypeptide is DNA-directed RNA polymerase subunit alpha (Neorickettsia sennetsu (strain ATCC VR-367 / Miyayama) (Ehrlichia sennetsu)).